Here is a 321-residue protein sequence, read N- to C-terminus: Ferrochelatase (321 aa).

Residues histidine 194 and glutamate 275 each contribute to the Fe cation site.

It belongs to the ferrochelatase family.

Its subcellular location is the cytoplasm. It carries out the reaction heme b + 2 H(+) = protoporphyrin IX + Fe(2+). It functions in the pathway porphyrin-containing compound metabolism; protoheme biosynthesis; protoheme from protoporphyrin-IX: step 1/1. In terms of biological role, catalyzes the ferrous insertion into protoporphyrin IX. This chain is Ferrochelatase, found in Wigglesworthia glossinidia brevipalpis.